We begin with the raw amino-acid sequence, 363 residues long: UDP-N-acetylglucosamine--N-acetylmuramyl-(pentapeptide) pyrophosphoryl-undecaprenol N-acetylglucosamine transferase (363 aa).

UDP-N-acetyl-alpha-D-glucosamine is bound by residues 12 to 14, R166, S196, and Q291; that span reads TAG.

This sequence belongs to the glycosyltransferase 28 family. MurG subfamily.

Its subcellular location is the cell inner membrane. The enzyme catalyses di-trans,octa-cis-undecaprenyl diphospho-N-acetyl-alpha-D-muramoyl-L-alanyl-D-glutamyl-meso-2,6-diaminopimeloyl-D-alanyl-D-alanine + UDP-N-acetyl-alpha-D-glucosamine = di-trans,octa-cis-undecaprenyl diphospho-[N-acetyl-alpha-D-glucosaminyl-(1-&gt;4)]-N-acetyl-alpha-D-muramoyl-L-alanyl-D-glutamyl-meso-2,6-diaminopimeloyl-D-alanyl-D-alanine + UDP + H(+). It participates in cell wall biogenesis; peptidoglycan biosynthesis. Its function is as follows. Cell wall formation. Catalyzes the transfer of a GlcNAc subunit on undecaprenyl-pyrophosphoryl-MurNAc-pentapeptide (lipid intermediate I) to form undecaprenyl-pyrophosphoryl-MurNAc-(pentapeptide)GlcNAc (lipid intermediate II). The protein is UDP-N-acetylglucosamine--N-acetylmuramyl-(pentapeptide) pyrophosphoryl-undecaprenol N-acetylglucosamine transferase of Legionella pneumophila (strain Paris).